We begin with the raw amino-acid sequence, 95 residues long: Phosphoribosyl-ATP pyrophosphatase (95 aa).

This sequence belongs to the PRA-PH family.

Its subcellular location is the cytoplasm. It carries out the reaction 1-(5-phospho-beta-D-ribosyl)-ATP + H2O = 1-(5-phospho-beta-D-ribosyl)-5'-AMP + diphosphate + H(+). It participates in amino-acid biosynthesis; L-histidine biosynthesis; L-histidine from 5-phospho-alpha-D-ribose 1-diphosphate: step 2/9. This chain is Phosphoribosyl-ATP pyrophosphatase, found in Methanocella arvoryzae (strain DSM 22066 / NBRC 105507 / MRE50).